The chain runs to 205 residues: GTP cyclohydrolase-2 (205 aa).

49-53 contributes to the GTP binding site; sequence RLHSE. Cysteine 54, cysteine 65, and cysteine 67 together coordinate Zn(2+). GTP is bound by residues glutamine 70, 92–94, and threonine 114; that span reads EGR. Aspartate 126 serves as the catalytic Proton acceptor. Arginine 128 acts as the Nucleophile in catalysis. Residues threonine 149 and lysine 154 each coordinate GTP.

This sequence belongs to the GTP cyclohydrolase II family. Requires Zn(2+) as cofactor.

It carries out the reaction GTP + 4 H2O = 2,5-diamino-6-hydroxy-4-(5-phosphoribosylamino)-pyrimidine + formate + 2 phosphate + 3 H(+). It participates in cofactor biosynthesis; riboflavin biosynthesis; 5-amino-6-(D-ribitylamino)uracil from GTP: step 1/4. In terms of biological role, catalyzes the conversion of GTP to 2,5-diamino-6-ribosylamino-4(3H)-pyrimidinone 5'-phosphate (DARP), formate and pyrophosphate. The polypeptide is GTP cyclohydrolase-2 (Pseudomonas paraeruginosa (strain DSM 24068 / PA7) (Pseudomonas aeruginosa (strain PA7))).